The following is a 635-amino-acid chain: Phosphatidylserine decarboxylase proenzyme 3 (635 aa).

A disordered region spans residues Met1–Ala42. Gly2 is lipidated: N-myristoyl glycine. Over residues Ser15–Ser31 the composition is skewed to basic residues. The C2 domain occupies Gln22 to Lys147. EF-hand domains follow at residues Ala180–Val210 and Val211–Gln246. Ca(2+) contacts are provided by Asp188, Asp190, Asp192, Lys194, Glu199, Asp224, Asn226, Asp228, and Glu235. Catalysis depends on charge relay system; for autoendoproteolytic cleavage activity residues Asp442, His498, and Ser586. Ser586 (schiff-base intermediate with substrate; via pyruvic acid; for decarboxylase activity) is an active-site residue. Position 586 is a pyruvic acid (Ser); by autocatalysis (Ser586).

It belongs to the phosphatidylserine decarboxylase family. PSD-B subfamily. Eukaryotic type II sub-subfamily. As to quaternary structure, heterodimer of a large membrane-associated beta subunit and a small pyruvoyl-containing alpha subunit. Pyruvate serves as cofactor. Is synthesized initially as an inactive proenzyme. Formation of the active enzyme involves a self-maturation process in which the active site pyruvoyl group is generated from an internal serine residue via an autocatalytic post-translational modification. Two non-identical subunits are generated from the proenzyme in this reaction, and the pyruvate is formed at the N-terminus of the alpha chain, which is derived from the carboxyl end of the proenzyme. The autoendoproteolytic cleavage occurs by a canonical serine protease mechanism, in which the side chain hydroxyl group of the serine supplies its oxygen atom to form the C-terminus of the beta chain, while the remainder of the serine residue undergoes an oxidative deamination to produce ammonia and the pyruvoyl prosthetic group on the alpha chain. During this reaction, the Ser that is part of the protease active site of the proenzyme becomes the pyruvoyl prosthetic group, which constitutes an essential element of the active site of the mature decarboxylase. In terms of tissue distribution, expressed in roots, leaves, stems and flowers.

The protein resides in the endoplasmic reticulum membrane. The enzyme catalyses a 1,2-diacyl-sn-glycero-3-phospho-L-serine + H(+) = a 1,2-diacyl-sn-glycero-3-phosphoethanolamine + CO2. The protein operates within phospholipid metabolism; phosphatidylethanolamine biosynthesis; phosphatidylethanolamine from CDP-diacylglycerol: step 2/2. Catalyzes the formation of phosphatidylethanolamine (PtdEtn) from phosphatidylserine (PtdSer). Plays a central role in phospholipid metabolism and in the interorganelle trafficking of phosphatidylserine. Contributes only to a minor proportion of PtdEtn production. This is Phosphatidylserine decarboxylase proenzyme 3 (PSD3) from Arabidopsis thaliana (Mouse-ear cress).